The primary structure comprises 513 residues: MTHASSAWFLAAVVIVTFIVVRHIRSSWRKLPPGPRGFPIVGNLLQLRNKQWLTFTELGKKYGDLMYFNVAGQPLIVINSLKVATDLLDRAKFSDRPRNIVASDIMTGGMFVAFAPYGNAWRHMRKAAHEGLNKNIVNQYHPIQIKEAVLLANDLLAEPNRWVSHVRRTAASTIMSIIYDKPPTSEQDPSIKRINDFATRLTRAAMPGAHFVESFPWMLRIPSKYAKWKRDAEGWYAKDSSMFESLFHSVKDRVAEGSNHPSFAATLIQGAGRHGLTDHENSWLAGAMYTAGAESSSAAMSWWMLAMILYPDAQKRAQAELDKVVGRDRLPAFSDYEHLPYVRAMVKETLRWRAVDPVGLPHRSTEDDIYNGYFIPAGSILIANVWHINRDPENYGLDAEHFDPARHLDGTGQLAQVAGTKEENHVSFGFGRRICVGRHIANDTLFAVIAMLLWAIDIEPAKDEKGASLPLDVDGCIEDGVVVRPLPFKVKVTPRFPEAQAIVEQERELLGHY.

The helical transmembrane segment at Met1–Val21 threads the bilayer. Heme is bound at residue Cys435. The N-linked (GlcNAc...) asparagine glycan is linked to Asn442.

The protein belongs to the cytochrome P450 family. Heme is required as a cofactor.

The protein resides in the membrane. The protein operates within secondary metabolite biosynthesis. Functionally, cytochrome P450 monooxygenase, part of the gene cluster that mediates the biosynthesis of melleolides, a range of antifungal and phytotoxic polyketide derivatives composed of an orsellinic acid (OA) moiety esterified to various sesquiterpene alcohols. The first step in melleolides biosynthesis is performed by the delta(6)-protoilludene synthase PRO1 which catalyzes the cyclization of farnesyl diphosphate to protoilludene. The orsellinic acid synthase armB produces OA by condensing acetyl-CoA with 3 malonyl-CoA units in a three-round chain elongation reaction folowed by a C2-C7 ring closure. ArmB further catalyzes the trans-esterification of OA to the various sesquiterpene alcohols resulting from the hydroxylation of protoilludene. The melleolides cluster also includes 5 cytochrome P450 monooxygenases, 4 NAD(+)-dependent oxidoreductases, one flavin-dependent oxidoreductase, and one O-methyltransferase. The cytochrome P450 monooxygenases may be involved in protoilludene hydroxylation to elaborate melleolides with multiple alcohol groups, such as melleolide D, which carries alcohol functionalities at C-4, C-5, C-10, and C-13. The role of the NAD(+)-dependent enzymes remains unknown. Numerous melleolides, including arnamial, show 5'-O-methylation of the aromatic moiety which may be catalyzed by the methyltransferase encoded in the cluster. The flavin-dependent oxidoreductase might represent the dehydrogenase yielding the aldehyde in position 1 of arnamial and other melleolides. Finally, several halogenase localized outside of the cluster, are able to catalyze the transfer of a single chlorine atom to the melleolide backbone, resulting in a 6'-chloromelleolide product. The sequence is that of Cytochrome P450 monooxygenase ARMGADRAFT_1018418 from Armillaria gallica (Bulbous honey fungus).